A 510-amino-acid polypeptide reads, in one-letter code: Pantetheinase (510 aa).

A signal peptide spans 1-22; sequence MIMSQLLNYVAVLFFCVSRASS. Residues 31-307 enclose the CN hydrolase domain; it reads YEHAVILPNA…GKLLLAQLDS (277 aa). N39 is a glycosylation site (N-linked (GlcNAc...) asparagine). E80 functions as the Proton acceptor in the catalytic mechanism. Residues N87 and N147 are each glycosylated (N-linked (GlcNAc...) asparagine). K179 serves as the catalytic Proton donor. N201 carries N-linked (GlcNAc...) asparagine glycosylation. The active-site Nucleophile is C212. Residues N316 and N354 are each glycosylated (N-linked (GlcNAc...) asparagine). D492 carries GPI-anchor amidated aspartate lipidation. Positions 493–510 are cleaved as a propeptide — removed in mature form; that stretch reads LTTQALRLNPKTDAWKSK. T504 is a glycosylation site (O-linked (GalNAc...) threonine).

This sequence belongs to the carbon-nitrogen hydrolase superfamily. BTD/VNN family. In terms of assembly, monomer.

The protein resides in the cell membrane. It carries out the reaction (R)-pantetheine + H2O = cysteamine + (R)-pantothenate. Functionally, amidohydrolase that hydrolyzes specifically one of the carboamide linkages in D-pantetheine thus recycling pantothenic acid (vitamin B5) and releasing cysteamine. This chain is Pantetheinase (VNN1), found in Bos taurus (Bovine).